We begin with the raw amino-acid sequence, 347 residues long: Tetraacyldisaccharide 4'-kinase (347 aa).

65 to 72 (FVGGTGKT) is an ATP binding site.

The protein belongs to the LpxK family.

It catalyses the reaction a lipid A disaccharide + ATP = a lipid IVA + ADP + H(+). The protein operates within glycolipid biosynthesis; lipid IV(A) biosynthesis; lipid IV(A) from (3R)-3-hydroxytetradecanoyl-[acyl-carrier-protein] and UDP-N-acetyl-alpha-D-glucosamine: step 6/6. In terms of biological role, transfers the gamma-phosphate of ATP to the 4'-position of a tetraacyldisaccharide 1-phosphate intermediate (termed DS-1-P) to form tetraacyldisaccharide 1,4'-bis-phosphate (lipid IVA). This chain is Tetraacyldisaccharide 4'-kinase, found in Janthinobacterium sp. (strain Marseille) (Minibacterium massiliensis).